The following is a 156-amino-acid chain: Nucleoredoxin-like protein 2 (156 aa).

The Thioredoxin domain occupies 9-147 (RLVTREGTVV…LACFQNWVEA (139 aa)).

It belongs to the nucleoredoxin family. As to expression, both isoforms are expressed in retina, in the photoreceptor layer, and throughout the olfactory sensory neuron layer of the nasal epithelium, in neurons. Also expressed at low levels in brain and testis.

May be involved in the maintenance of both the function and the viability of sensory neurons, including photoreceptors and olfactory neurons. In the retina, isoform 1 may be required for rod function and isoform 2 for cone viability and function. This chain is Nucleoredoxin-like protein 2 (Nxnl2), found in Mus musculus (Mouse).